Consider the following 90-residue polypeptide: UPF0298 protein BLi01717/BL02989 (90 aa).

It belongs to the UPF0298 family.

It localises to the cytoplasm. This is UPF0298 protein BLi01717/BL02989 from Bacillus licheniformis (strain ATCC 14580 / DSM 13 / JCM 2505 / CCUG 7422 / NBRC 12200 / NCIMB 9375 / NCTC 10341 / NRRL NRS-1264 / Gibson 46).